Consider the following 127-residue polypeptide: Large-conductance mechanosensitive channel (127 aa).

3 helical membrane-spanning segments follow: residues 9-29 (EFAM…GVAF), 32-52 (IVTA…LGGI), and 75-95 (VIDF…INLL).

This sequence belongs to the MscL family. In terms of assembly, homopentamer.

It localises to the cell inner membrane. Functionally, channel that opens in response to stretch forces in the membrane lipid bilayer. May participate in the regulation of osmotic pressure changes within the cell. The sequence is that of Large-conductance mechanosensitive channel from Legionella pneumophila (strain Paris).